Here is a 293-residue protein sequence, read N- to C-terminus: NAD kinase (293 aa).

Asp72 acts as the Proton acceptor in catalysis. Residues 72-73, 146-147, Arg157, Arg174, Asp176, 187-192, and Gln247 contribute to the NAD(+) site; these read DG, ND, and TAYALS.

Belongs to the NAD kinase family. Requires a divalent metal cation as cofactor.

The protein resides in the cytoplasm. The catalysed reaction is NAD(+) + ATP = ADP + NADP(+) + H(+). Involved in the regulation of the intracellular balance of NAD and NADP, and is a key enzyme in the biosynthesis of NADP. Catalyzes specifically the phosphorylation on 2'-hydroxyl of the adenosine moiety of NAD to yield NADP. This is NAD kinase from Chromohalobacter salexigens (strain ATCC BAA-138 / DSM 3043 / CIP 106854 / NCIMB 13768 / 1H11).